The chain runs to 356 residues: Peptide chain release factor 1 (356 aa).

At Gln232 the chain carries N5-methylglutamine.

The protein belongs to the prokaryotic/mitochondrial release factor family. Methylated by PrmC. Methylation increases the termination efficiency of RF1.

It is found in the cytoplasm. Peptide chain release factor 1 directs the termination of translation in response to the peptide chain termination codons UAG and UAA. This chain is Peptide chain release factor 1, found in Thermoanaerobacter pseudethanolicus (strain ATCC 33223 / 39E) (Clostridium thermohydrosulfuricum).